The sequence spans 122 residues: UPF0231 protein VIBHAR_03438 (122 aa).

This sequence belongs to the UPF0231 family.

This Vibrio campbellii (strain ATCC BAA-1116) protein is UPF0231 protein VIBHAR_03438.